Consider the following 196-residue polypeptide: uncharacterized protein (196 aa).

The HTH tetR-type domain occupies 7–67; that stretch reads RNTKEKILTA…AVIDNHVKIW (61 aa). The segment at residues 30 to 49 is a DNA-binding region (H-T-H motif); the sequence is SINDILDETATGKGQFYYYF.

This is an uncharacterized protein from Lactococcus lactis subsp. lactis (Streptococcus lactis).